The sequence spans 55 residues: Protein CADMIUM TOLERANCE 1 (55 aa).

Residues 24–40 (GCLYACIFTALCCFCCY) form a helical membrane-spanning segment.

This sequence belongs to the CYSTM1 family. As to expression, expressed in roots and shoots.

Its subcellular location is the cell membrane. It localises to the secreted. The protein localises to the cell wall. Confers resistance to heavy metal ions (e.g. cadmium (CdCl(2)) and copper (CuCl(2))) by chelating them at the plasma membrane of root cells, thus stopping their entry and reducing their accumulation. Binds to aluminium (Al). The chain is Protein CADMIUM TOLERANCE 1 from Oryza sativa subsp. japonica (Rice).